A 694-amino-acid polypeptide reads, in one-letter code: ATP-dependent RNA helicase DHX33 (694 aa).

One can recognise a Helicase ATP-binding domain in the interval 78–246 (LKELEANDTV…FNCKGMYLEG (169 aa)). 91–98 (SETGSGKT) lines the ATP pocket. The DEAH box motif lies at 188–191 (DEAH). In terms of domain architecture, Helicase C-terminal spans 270–443 (TLFHIHRTTP…SMVLQLLALD (174 aa)).

Belongs to the DEAD box helicase family. DEAH subfamily.

Its subcellular location is the nucleus. It is found in the nucleolus. The catalysed reaction is ATP + H2O = ADP + phosphate + H(+). Part of a translational control module, also containing pths/DDX47 and ais/DDX52, which coordinates germline stem cell differentiation with ribosome biogenesis during oogenesis. This module allows for coregulation of ribosomal proteins and non1/GTPBP4, a p53 repressor, preventing p53 stabilization, cell cycle arrest and loss of stem cell differentiation. The chain is ATP-dependent RNA helicase DHX33 from Drosophila melanogaster (Fruit fly).